A 169-amino-acid chain; its full sequence is Large ribosomal subunit protein uL10 (169 aa).

This sequence belongs to the universal ribosomal protein uL10 family. In terms of assembly, part of the ribosomal stalk of the 50S ribosomal subunit. The N-terminus interacts with L11 and the large rRNA to form the base of the stalk. The C-terminus forms an elongated spine to which L12 dimers bind in a sequential fashion forming a multimeric L10(L12)X complex.

Its function is as follows. Forms part of the ribosomal stalk, playing a central role in the interaction of the ribosome with GTP-bound translation factors. The polypeptide is Large ribosomal subunit protein uL10 (Rickettsia typhi (strain ATCC VR-144 / Wilmington)).